Reading from the N-terminus, the 389-residue chain is 8-amino-7-oxononanoate synthase 2 (389 aa).

R21 contacts substrate. 108-109 lines the pyridoxal 5'-phosphate pocket; the sequence is GY. H133 is a substrate binding site. Pyridoxal 5'-phosphate is bound by residues S180, 205–208, and 234–237; these read DDAH and TLSK. K237 carries the N6-(pyridoxal phosphate)lysine modification. T351 is a substrate binding site.

It belongs to the class-II pyridoxal-phosphate-dependent aminotransferase family. BioF subfamily. Homodimer. The cofactor is pyridoxal 5'-phosphate.

It carries out the reaction 6-carboxyhexanoyl-[ACP] + L-alanine + H(+) = (8S)-8-amino-7-oxononanoate + holo-[ACP] + CO2. The protein operates within cofactor biosynthesis; biotin biosynthesis. Its function is as follows. Catalyzes the decarboxylative condensation of pimeloyl-[acyl-carrier protein] and L-alanine to produce 8-amino-7-oxononanoate (AON), [acyl-carrier protein], and carbon dioxide. The sequence is that of 8-amino-7-oxononanoate synthase 2 (bioF) from Bacillus subtilis (strain 168).